Reading from the N-terminus, the 201-residue chain is Anthranilate synthase component 2 (201 aa).

One can recognise a Glutamine amidotransferase type-1 domain in the interval 3–196 (NILFIDNFDS…IDWALSSTPA (194 aa)). 57–59 (GPG) is a binding site for L-glutamine. The active-site Nucleophile; for GATase activity is the cysteine 84. L-glutamine contacts are provided by residues glutamine 88 and 134 to 135 (SL). Active-site for GATase activity residues include histidine 170 and glutamate 172.

Heterotetramer consisting of two non-identical subunits: a beta subunit (TrpG) and a large alpha subunit (TrpE).

It carries out the reaction chorismate + L-glutamine = anthranilate + pyruvate + L-glutamate + H(+). Its pathway is amino-acid biosynthesis; L-tryptophan biosynthesis; L-tryptophan from chorismate: step 1/5. Its function is as follows. Part of a heterotetrameric complex that catalyzes the two-step biosynthesis of anthranilate, an intermediate in the biosynthesis of L-tryptophan. In the first step, the glutamine-binding beta subunit (TrpG) of anthranilate synthase (AS) provides the glutamine amidotransferase activity which generates ammonia as a substrate that, along with chorismate, is used in the second step, catalyzed by the large alpha subunit of AS (TrpE) to produce anthranilate. In the absence of TrpG, TrpE can synthesize anthranilate directly from chorismate and high concentrations of ammonia. This chain is Anthranilate synthase component 2 (trpG), found in Vibrio cholerae serotype O1 (strain ATCC 39315 / El Tor Inaba N16961).